A 62-amino-acid polypeptide reads, in one-letter code: uncharacterized protein (62 aa).

The segment covering 1–13 (MGESKSPQESSSE) has biased composition (polar residues). A disordered region spans residues 1–62 (MGESKSPQES…SRREFRRKSG (62 aa)). Over residues 14–28 (GETKRKFREALDRKM) the composition is skewed to basic and acidic residues.

This is an uncharacterized protein from Mycobacterium tuberculosis (strain ATCC 25618 / H37Rv).